A 287-amino-acid chain; its full sequence is MAGAKEIRSKIASVQNTQKITKAMEMVAASKMRKSQDRMAASRPYAETMRKVIGHLANGNLEYKHPYLEERDVKRVGYLVVSTDRGLCGGLNINLFKKLLADMKAWSDKGVQCELAMIGSKGVSFFNSVGGNVVSQVTGMGDNPSLSELIGPVKVMLQAYDEGRLDKLYIVSNKFINTMSQVPTITQLLPLPASEDDDLKRKAWDYLYEPDPKALLDTLLRRYVESQVYQGVVENLASEQAARMVAMKAATDNGGSLIKELQLVYNKARQASITQELTEIVSGAAAV.

This sequence belongs to the ATPase gamma chain family. In terms of assembly, F-type ATPases have 2 components, CF(1) - the catalytic core - and CF(0) - the membrane proton channel. CF(1) has five subunits: alpha(3), beta(3), gamma(1), delta(1), epsilon(1). CF(0) has three main subunits: a, b and c.

The protein resides in the cell inner membrane. In terms of biological role, produces ATP from ADP in the presence of a proton gradient across the membrane. The gamma chain is believed to be important in regulating ATPase activity and the flow of protons through the CF(0) complex. The sequence is that of ATP synthase gamma chain from Salmonella gallinarum (strain 287/91 / NCTC 13346).